The sequence spans 754 residues: 5-methyltetrahydropteroyltriglutamate--homocysteine methyltransferase (754 aa).

5-methyltetrahydropteroyltri-L-glutamate-binding positions include 17–20 (RELK) and Lys-110. L-homocysteine is bound by residues 421–423 (IGS) and Glu-474. L-methionine-binding positions include 421–423 (IGS) and Glu-474. 5-methyltetrahydropteroyltri-L-glutamate is bound by residues 505-506 (RC) and Trp-551. Asp-589 lines the L-homocysteine pocket. Asp-589 is a binding site for L-methionine. Glu-595 provides a ligand contact to 5-methyltetrahydropteroyltri-L-glutamate. Residues His-631, Cys-633, and Glu-655 each contribute to the Zn(2+) site. His-684 serves as the catalytic Proton donor. Cys-716 is a Zn(2+) binding site.

It belongs to the vitamin-B12 independent methionine synthase family. Requires Zn(2+) as cofactor.

It carries out the reaction 5-methyltetrahydropteroyltri-L-glutamate + L-homocysteine = tetrahydropteroyltri-L-glutamate + L-methionine. Its pathway is amino-acid biosynthesis; L-methionine biosynthesis via de novo pathway; L-methionine from L-homocysteine (MetE route): step 1/1. Functionally, catalyzes the transfer of a methyl group from 5-methyltetrahydrofolate to homocysteine resulting in methionine formation. In Synechococcus sp. (strain JA-2-3B'a(2-13)) (Cyanobacteria bacterium Yellowstone B-Prime), this protein is 5-methyltetrahydropteroyltriglutamate--homocysteine methyltransferase.